Reading from the N-terminus, the 149-residue chain is Large ribosomal subunit protein eL24A (149 aa).

Composition is skewed to basic and acidic residues over residues Lys93–Ala102 and Lys116–Ala125. The interval Lys93–His149 is disordered.

This sequence belongs to the eukaryotic ribosomal protein eL24 family. In terms of assembly, component of the large ribosomal subunit (LSU). Mature yeast ribosomes consist of a small (40S) and a large (60S) subunit. The 40S small subunit contains 1 molecule of ribosomal RNA (18S rRNA) and at least 33 different proteins. The large 60S subunit contains 3 rRNA molecules (25S, 5.8S and 5S rRNA) and at least 46 different proteins.

It is found in the cytoplasm. Component of the ribosome, a large ribonucleoprotein complex responsible for the synthesis of proteins in the cell. The small ribosomal subunit (SSU) binds messenger RNAs (mRNAs) and translates the encoded message by selecting cognate aminoacyl-transfer RNA (tRNA) molecules. The large subunit (LSU) contains the ribosomal catalytic site termed the peptidyl transferase center (PTC), which catalyzes the formation of peptide bonds, thereby polymerizing the amino acids delivered by tRNAs into a polypeptide chain. The nascent polypeptides leave the ribosome through a tunnel in the LSU and interact with protein factors that function in enzymatic processing, targeting, and the membrane insertion of nascent chains at the exit of the ribosomal tunnel. This chain is Large ribosomal subunit protein eL24A (rpl2401), found in Schizosaccharomyces pombe (strain 972 / ATCC 24843) (Fission yeast).